We begin with the raw amino-acid sequence, 153 residues long: Histone H2B.6 (153 aa).

2 stretches are compositionally biased toward basic and acidic residues: residues 1–28 (MAPKAEKKPAAKKPAEEEPAAEKAEKAP) and 36–53 (EKRLPAGKGEKGSGEGKK). The disordered stretch occupies residues 1 to 60 (MAPKAEKKPAAKKPAEEEPAAEKAEKAPAGKKPKAEKRLPAGKGEKGSGEGKKAGRKKGK). N6-acetyllysine is present on residues lysine 7 and lysine 37. Residue lysine 149 forms a Glycyl lysine isopeptide (Lys-Gly) (interchain with G-Cter in ubiquitin) linkage.

It belongs to the histone H2B family. The nucleosome is a histone octamer containing two molecules each of H2A, H2B, H3 and H4 assembled in one H3-H4 heterotetramer and two H2A-H2B heterodimers. The octamer wraps approximately 147 bp of DNA. Can be acetylated to form H2BK6ac and H2BK33ac. Post-translationally, monoubiquitinated by BRE1 to form H2BK143ub1 and deubiquitinated by UBP26. Required for heterochromatic histone H3 di- and trimethylation at H3K4me. May give a specific tag for epigenetic transcriptional activation.

Its subcellular location is the nucleus. The protein resides in the chromosome. Its function is as follows. Core component of nucleosome. Nucleosomes wrap and compact DNA into chromatin, limiting DNA accessibility to the cellular machineries which require DNA as a template. Histones thereby play a central role in transcription regulation, DNA repair, DNA replication and chromosomal stability. DNA accessibility is regulated via a complex set of post-translational modifications of histones, also called histone code, and nucleosome remodeling. The protein is Histone H2B.6 (H2B.6) of Oryza sativa subsp. japonica (Rice).